A 488-amino-acid polypeptide reads, in one-letter code: Type II restriction enzyme HgaI (488 aa).

It catalyses the reaction Endonucleolytic cleavage of DNA to give specific double-stranded fragments with terminal 5'-phosphates.. Functionally, an S subtype restriction enzyme that recognizes the double-stranded sequences 5'-GACGC-3' and 5'-GCGTC-3' and cleaves respectively 10 bases after G-1 and 10 bases before G'-1. The polypeptide is Type II restriction enzyme HgaI (hgaIR) (Avibacterium volantium (Pasteurella volantium)).